A 172-amino-acid chain; its full sequence is Phosphopantetheine adenylyltransferase (172 aa).

Threonine 13 provides a ligand contact to substrate. Residues 13-14 (TF) and histidine 21 contribute to the ATP site. Lysine 45, leucine 81, and arginine 95 together coordinate substrate. ATP is bound by residues 96 to 98 (GLR), glutamate 106, and 131 to 137 (SQFISSR).

It belongs to the bacterial CoaD family. As to quaternary structure, homohexamer. Mg(2+) serves as cofactor.

The protein localises to the cytoplasm. The catalysed reaction is (R)-4'-phosphopantetheine + ATP + H(+) = 3'-dephospho-CoA + diphosphate. It participates in cofactor biosynthesis; coenzyme A biosynthesis; CoA from (R)-pantothenate: step 4/5. In terms of biological role, reversibly transfers an adenylyl group from ATP to 4'-phosphopantetheine, yielding dephospho-CoA (dPCoA) and pyrophosphate. The polypeptide is Phosphopantetheine adenylyltransferase (Rhodospirillum rubrum (strain ATCC 11170 / ATH 1.1.1 / DSM 467 / LMG 4362 / NCIMB 8255 / S1)).